The primary structure comprises 481 residues: Serine/threonine-protein kinase US3 (481 aa).

The tract at residues 12-63 (GQGRRKEEAVPPETKPSRVFPHGPFYTPAEDACLDSPPPETPKPSHTTPPSE) is disordered. The region spanning 191–478 (FTIHGALTPG…AAELLCLPLF (288 aa)) is the Protein kinase domain. ATP is bound by residues 197–205 (LTPGSEGCV) and K220. The Proton acceptor role is filled by D305.

This sequence belongs to the protein kinase superfamily. Ser/Thr protein kinase family. In terms of assembly, interacts with host LAT; this interaction prevents LAT activation of TRAF6. Phosphorylated by UL13; this phosphorylation regulates subsequent phosphorylation of UL31 and UL34 by US3. Autophosphorylated.

It localises to the host cytoplasm. The protein localises to the host nucleus. The catalysed reaction is L-seryl-[protein] + ATP = O-phospho-L-seryl-[protein] + ADP + H(+). It catalyses the reaction L-threonyl-[protein] + ATP = O-phospho-L-threonyl-[protein] + ADP + H(+). Functionally, multifunctional serine/threonine kinase that plays a role in several processes including egress of virus particles from the nucleus, modulation of the actin cytoskeleton and inhibition of host immune response. Phosphorylates UL31 and UL34, two critical regulators of capsid budding from nucleus to endoplasmic reticulum, thereby facilitating virion egress. Modulates and redistributes host components of the nuclear envelope, including LMNA, emerin/EMD and the nuclear matrix protein MATR3. In turn, facilitates nuclear pore impairment and capsid release through impaired nuclear envelope. Phosphorylates envelope glycoprotein B (gB), probably to direct it to the cell surface. Promotes virus intracellular spread by restructuring host cell cytoskeleton. Blocks host apoptosis to extend cell survival and allow efficient viral replication. Promotes viral gene expression by phosphorylating host HDAC2 to reduce viral genome silencing. Strongly inhibits TCR-activated signal transduction in T-cells by reducing the ubiquitination of LAT and TRAF6, leading to a suboptimal activation of LAT. Subverts host antiviral innate immunity by inhibiting type I interferon production through hyperphosphorylation of beta-catenin/CTNNB1. In addition, phosphorylates the RNA sensor RIGI and the transcription factor IRF3 to prevent the RLR-mediated antiviral signaling pathway. Hyperphosphorylates host RELA and thereby dampens NF-kappa-B signaling. Acts as an immunoevasin partly responsible for inhibition of MR1 expression and antigen presentation in response to bacterial infection. The protein is Serine/threonine-protein kinase US3 (US3) of Human herpesvirus 1 (strain 17) (HHV-1).